The chain runs to 296 residues: MIIHPNFDPVAIHLGPLAVRWYGLMYLVGFIAAIVVGRIRLKLPHVAAQGWTAKDIDDMMFYGVLGTVLGGRLGYVLFYKADFYFSHPLDVFKVWEGGMSFHGGFLGVTLAMVLFAWQRKRHWLQVTDFVAPMVPAGLAAGRLGNFINGELWGRVTDPNAPWAMLFPGAMRDDAAWLSKHPALVEKWHLADVFMQYQMLPRHPSQLYEIALEGIALFFVLFFFSRKPRPLGAVSALFLIGYGLARFTVEFAREPDDFLGLLALGLSMGQWLSLPMILAGIALLVWGYRRRPVNAAA.

7 helical membrane passes run 17-37 (LAVR…IVVG), 59-79 (MMFY…VLFY), 97-117 (GGMS…LFAW), 129-149 (FVAP…FING), 203-223 (PSQL…LFFF), 230-250 (LGAV…TVEF), and 265-285 (LSMG…LLVW). A 1,2-diacyl-sn-glycero-3-phospho-(1'-sn-glycerol) is bound at residue Arg142.

It belongs to the Lgt family.

It is found in the cell inner membrane. It catalyses the reaction L-cysteinyl-[prolipoprotein] + a 1,2-diacyl-sn-glycero-3-phospho-(1'-sn-glycerol) = an S-1,2-diacyl-sn-glyceryl-L-cysteinyl-[prolipoprotein] + sn-glycerol 1-phosphate + H(+). It functions in the pathway protein modification; lipoprotein biosynthesis (diacylglyceryl transfer). Its function is as follows. Catalyzes the transfer of the diacylglyceryl group from phosphatidylglycerol to the sulfhydryl group of the N-terminal cysteine of a prolipoprotein, the first step in the formation of mature lipoproteins. The polypeptide is Phosphatidylglycerol--prolipoprotein diacylglyceryl transferase (Burkholderia ambifaria (strain MC40-6)).